A 200-amino-acid polypeptide reads, in one-letter code: Large ribosomal subunit protein uL4c (200 aa).

The interval R45 to S71 is disordered. Residues G51 to S68 show a composition bias toward basic residues.

This sequence belongs to the universal ribosomal protein uL4 family. In terms of assembly, part of the 50S ribosomal subunit.

It localises to the plastid. It is found in the chloroplast. Functionally, probably binds the 23S rRNA. The polypeptide is Large ribosomal subunit protein uL4c (rpl4) (Cyanidioschyzon merolae (strain NIES-3377 / 10D) (Unicellular red alga)).